Here is a 76-residue protein sequence, read N- to C-terminus: Kappa-actitoxin-Avd4n (76 aa).

A signal peptide spans 1–19; the sequence is MNKAFFLCLVVLCAAVVFA. Residues 20 to 31 constitute a propeptide that is removed on maturation; the sequence is AEDLQKGKHAPF. 2 disulfide bridges follow: Cys37–Cys72 and Cys39–Cys65.

It belongs to the sea anemone type 3 (BDS) potassium channel toxin family. In terms of processing, lacks the conventional Cys residue at position 55. Thus, only 2 disulfide are possible present. Experimental results show no expression in the ectodermal tissue from the distal and proximal tentacles, body wall, and oral disk. Since paralogs are expressed in this tissue, an expression of this toxin in this tissue is probable. The negative results could be explained by the very low abundance of EST sequences.

It is found in the secreted. The protein localises to the nematocyst. Functionally, blocks Kv3 voltage-gated potassium channels. Reduces blood pressure. The protein is Kappa-actitoxin-Avd4n of Anemonia viridis (Snakelocks anemone).